A 206-amino-acid chain; its full sequence is Large ribosomal subunit protein uL13x (206 aa).

It belongs to the universal ribosomal protein uL13 family.

This chain is Large ribosomal subunit protein uL13x (RPL13AC), found in Arabidopsis thaliana (Mouse-ear cress).